The sequence spans 257 residues: Thiazole synthase (257 aa).

The active-site Schiff-base intermediate with DXP is the lysine 98. 1-deoxy-D-xylulose 5-phosphate is bound by residues glycine 159, 185–186, and 207–208; these read AG and NT.

The protein belongs to the ThiG family. Homotetramer. Forms heterodimers with either ThiH or ThiS.

It localises to the cytoplasm. It carries out the reaction [ThiS sulfur-carrier protein]-C-terminal-Gly-aminoethanethioate + 2-iminoacetate + 1-deoxy-D-xylulose 5-phosphate = [ThiS sulfur-carrier protein]-C-terminal Gly-Gly + 2-[(2R,5Z)-2-carboxy-4-methylthiazol-5(2H)-ylidene]ethyl phosphate + 2 H2O + H(+). It functions in the pathway cofactor biosynthesis; thiamine diphosphate biosynthesis. In terms of biological role, catalyzes the rearrangement of 1-deoxy-D-xylulose 5-phosphate (DXP) to produce the thiazole phosphate moiety of thiamine. Sulfur is provided by the thiocarboxylate moiety of the carrier protein ThiS. In vitro, sulfur can be provided by H(2)S. This chain is Thiazole synthase, found in Anaeromyxobacter dehalogenans (strain 2CP-1 / ATCC BAA-258).